The chain runs to 443 residues: Inactive polypeptide N-acetylgalactosaminyltransferase-like protein 5 (443 aa).

Over 1 to 4 (MRNA) the chain is Cytoplasmic. A helical; Signal-anchor for type II membrane protein membrane pass occupies residues 5–27 (IIRCLFYGSLTFGIWTALLFIYL). Residues 28-443 (HHNHVSNWQK…PELEASVNRS (416 aa)) lie on the Lumenal side of the membrane. An N-linked (GlcNAc...) asparagine glycan is attached at Asn87. 2 disulfides stabilise this stretch: Cys124–Cys355 and Cys346–Cys422. The segment at 133–243 (LPTASIVICF…RVWLEPLLHA (111 aa)) is catalytic subdomain A. Asp174 and Arg204 together coordinate substrate. Residue Asp227 coordinates Mn(2+). Position 228 (Ser228) interacts with substrate. His229 serves as a coordination point for Mn(2+). Residues 301–363 (PIRSPAMSGG…PCSRVGHISK (63 aa)) form a catalytic subdomain B region. Residue Trp332 participates in substrate binding. A Mn(2+)-binding site is contributed by His360.

Belongs to the glycosyltransferase 2 family. GalNAc-T subfamily. It depends on Mn(2+) as a cofactor. In terms of tissue distribution, expressed in testis.

The protein resides in the late endosome membrane. Probable inactive glycosyltransferase required during spermatid development. May participate in protein loading into the acrosomes and accumulation of ubiquitin-proteasome systems around the head-tail coupling apparatus region. This Macaca fascicularis (Crab-eating macaque) protein is Inactive polypeptide N-acetylgalactosaminyltransferase-like protein 5 (GALNTL5).